The chain runs to 400 residues: Large envelope protein (400 aa).

Met1 carries the post-translational modification N-acetylmethionine. Gly2 carries the N-myristoyl glycine; by host lipid modification. The interval 2–119 (GGWSSKPRQG…PPLRDSHPQA (118 aa)) is pre-S1. The interval 2-174 (GGWSSKPRQG…FSRIGDPALN (173 aa)) is pre-S. Over 2-181 (GGWSSKPRQG…ALNMENITSG (180 aa)) the chain is Virion surface; in external conformation. The Intravirion; in internal conformation segment spans residues 2–253 (GGWSSKPRQG…PGYRWMCLRR (252 aa)). The N-linked (GlcNAc...) asparagine glycan is linked to Trp4. The segment at 85–118 (LTTVPAAPPPASSNRQSGKQPTPISPPLRDSHPQ) is disordered. Polar residues predominate over residues 96 to 106 (SSNRQSGKQPT). The pre-S2 stretch occupies residues 120-174 (MQWNSTTFHQTLQDPRVRGLYFPAGGSSSGTVNPVPTTASPISSIFSRIGDPALN). A helical transmembrane segment spans residues 182-202 (FLGPLLVLQAGFFLLTRILTI). Topologically, residues 203–253 (PQSLDSWWTSLNFLGGTTVCLGQNSQSPISNHSPTSCPPTCPGYRWMCLRR) are intravirion; in external conformation. Residues 254–274 (FIIFLFILLLCLIFLLVLLDY) form a helical membrane-spanning segment. Over 275–348 (QGMLPVCPLI…WASARFSWLS (74 aa)) the chain is Virion surface. The N-linked (GlcNAc...) asparagine; by host glycan is linked to Asn320. Residues 349–369 (LLVPFVQWFVGLSPTVWLSVI) form a helical membrane-spanning segment. Residues 370-375 (WMMWYW) are Intravirion-facing. The helical transmembrane segment at 376–398 (GPSLYSILSPFLPLLPIFFCLWV) threads the bilayer. The Virion surface portion of the chain corresponds to 399–400 (YI).

It belongs to the orthohepadnavirus major surface antigen family. In its internal form (Li-HBsAg), interacts with the capsid protein and with the isoform S. Interacts with host chaperone CANX. In terms of assembly, associates with host chaperone CANX through its pre-S2 N glycan; this association may be essential for isoform M proper secretion. As to quaternary structure, interacts with isoform L. Interacts with the antigens of satellite virus HDV (HDVAgs); this interaction is required for encapsidation of HDV genomic RNA. Isoform M is N-terminally acetylated by host at a ratio of 90%, and N-glycosylated by host at the pre-S2 region. In terms of processing, myristoylated.

It localises to the virion membrane. Its function is as follows. The large envelope protein exists in two topological conformations, one which is termed 'external' or Le-HBsAg and the other 'internal' or Li-HBsAg. In its external conformation the protein attaches the virus to cell receptors and thereby initiating infection. This interaction determines the species specificity and liver tropism. This attachment induces virion internalization predominantly through caveolin-mediated endocytosis. The large envelope protein also assures fusion between virion membrane and endosomal membrane. In its internal conformation the protein plays a role in virion morphogenesis and mediates the contact with the nucleocapsid like a matrix protein. In terms of biological role, the middle envelope protein plays an important role in the budding of the virion. It is involved in the induction of budding in a nucleocapsid independent way. In this process the majority of envelope proteins bud to form subviral lipoprotein particles of 22 nm of diameter that do not contain a nucleocapsid. The protein is Large envelope protein of Homo sapiens (Human).